Reading from the N-terminus, the 193-residue chain is Secreted RxLR effector protein 126 (193 aa).

A signal peptide spans 1–20; it reads MRYLLAVLIAAAFVISSGTS. The RxLR-dEER signature appears at 50-64; that stretch reads RMLQTKAVNGLEEER.

Belongs to the RxLR effector family.

The protein resides in the secreted. The protein localises to the host membrane. Functionally, secreted effector that completely suppresses the host cell death induced by cell death-inducing proteins. In Plasmopara viticola (Downy mildew of grapevine), this protein is Secreted RxLR effector protein 126.